The chain runs to 284 residues: P2R1A-PPP2R2A-interacting phosphatase regulator 1 (284 aa).

The disordered stretch occupies residues Met-1–Arg-65. The segment covering Glu-20 to Leu-29 has biased composition (gly residues). Ser-32 carries the post-translational modification Phosphoserine. Residue Ser-34 is modified to Phosphoserine; by CHEK1. 4 positions are modified to phosphoserine: Ser-42, Ser-45, Ser-59, and Ser-73. A Glycyl lysine isopeptide (Lys-Gly) (interchain with G-Cter in SUMO1) cross-link involves residue Lys-86. 2 positions are modified to phosphoserine: Ser-140 and Ser-144. Phosphothreonine is present on Thr-146. The disordered stretch occupies residues Ser-164–Gln-185. A compositionally biased stretch (low complexity) spans Pro-175–Gln-185. Residues Ser-184 and Ser-186 each carry the phosphoserine modification. The segment at Gly-233 to Lys-284 is disordered. Positions Gly-243 to Ser-254 are enriched in low complexity. The segment covering Ala-256–Ser-267 has biased composition (polar residues). Residues Ser-264, Ser-267, and Ser-273 each carry the phosphoserine modification.

It belongs to the FAM122 family. Interacts with PPP2CA and PPP2R1A. Interacts (via its N-terminus) with PPP2R2A; the interaction is direct and this interaction inhibits PP2A activity. The CHEK1-mediated Ser-34 phosphorylated form interacts with 14-3-3 proteins. CHEK1-mediated phosphorylation at Ser-34 negatively regulates its ability to inhibit serine/threonine-protein phosphatase 2A (PP2A) activity. Phosphorylation leads to its release from the PP2A complex and its sequestration by 14-3-3 proteins in the cytoplasm resulting in its inability to translocate to the nucleus, where it otherwise inhibits PP2A.

The protein localises to the nucleus. Its subcellular location is the cytoplasm. In terms of biological role, acts as an inhibitor of serine/threonine-protein phosphatase 2A (PP2A) activity. Inhibits PP2A activity by blocking the substrate binding site on PPP2R2A and the active site of PPP2CA. Potentiates ubiquitin-mediated proteasomal degradation of serine/threonine-protein phosphatase 2A catalytic subunit alpha (PPP2CA). Inhibits PP2A-mediated dephosphorylation of WEE1, promoting ubiquitin-mediated proteolysis of WEE1, thereby releasing G2/M checkpoint. The sequence is that of P2R1A-PPP2R2A-interacting phosphatase regulator 1 from Mus musculus (Mouse).